Reading from the N-terminus, the 223-residue chain is Deoxyribose-phosphate aldolase (223 aa).

Catalysis depends on Asp89, which acts as the Proton donor/acceptor. Lys152 functions as the Schiff-base intermediate with acetaldehyde in the catalytic mechanism. Lys181 (proton donor/acceptor) is an active-site residue.

The protein belongs to the DeoC/FbaB aldolase family. DeoC type 1 subfamily.

It is found in the cytoplasm. The enzyme catalyses 2-deoxy-D-ribose 5-phosphate = D-glyceraldehyde 3-phosphate + acetaldehyde. It participates in carbohydrate degradation; 2-deoxy-D-ribose 1-phosphate degradation; D-glyceraldehyde 3-phosphate and acetaldehyde from 2-deoxy-alpha-D-ribose 1-phosphate: step 2/2. Functionally, catalyzes a reversible aldol reaction between acetaldehyde and D-glyceraldehyde 3-phosphate to generate 2-deoxy-D-ribose 5-phosphate. This chain is Deoxyribose-phosphate aldolase, found in Bacillus cereus (strain ZK / E33L).